The primary structure comprises 782 residues: Small RNA degrading nuclease 3 (782 aa).

In terms of domain architecture, Exonuclease spans 145-296 (MLSIDCEMVT…HDAAAAMKLV (152 aa)). The RRM 1 domain occupies 331-410 (AQLFLHKIPH…KKAVLKLSSG (80 aa)). The interval 426 to 464 (PCEISTSERARAEENNVSSKRQKTEDETEETKEATVNQR) is disordered. Positions 469–549 (TKLFLHKIPH…KMVVFKLSSG (81 aa)) constitute an RRM 2 domain. A disordered region spans residues 563 to 605 (DSPGEISTTKRARTEESNMSSKRQKTEDESEETKEANAKQREA). Residues 577–605 (EESNMSSKRQKTEDESEETKEANAKQREA) adopt a coiled-coil conformation. The segment covering 595-605 (TKEANAKQREA) has biased composition (basic and acidic residues). The RRM 3 domain maps to 608 to 688 (TKLLLHKIPL…KMVAFKLSSG (81 aa)). The stretch at 709-779 (ANANHCEDDH…KMKLEKKQSK (71 aa)) forms a coiled coil.

The protein belongs to the REXO1/REXO3 family. As to quaternary structure, associated with the Mediator complex.

Its subcellular location is the nucleus. Functionally, 3'-5' exonuclease degrading single-stranded small RNAs. The chain is Small RNA degrading nuclease 3 (SDN3) from Arabidopsis thaliana (Mouse-ear cress).